We begin with the raw amino-acid sequence, 391 residues long: Chorismate synthase (391 aa).

Residue R48 coordinates NADP(+). Residues 126–128 (RAS), G286, 301–305 (KPTSS), and R328 contribute to the FMN site.

The protein belongs to the chorismate synthase family. It depends on FMNH2 as a cofactor.

It catalyses the reaction 5-O-(1-carboxyvinyl)-3-phosphoshikimate = chorismate + phosphate. Its pathway is metabolic intermediate biosynthesis; chorismate biosynthesis; chorismate from D-erythrose 4-phosphate and phosphoenolpyruvate: step 7/7. In terms of biological role, catalyzes the anti-1,4-elimination of the C-3 phosphate and the C-6 proR hydrogen from 5-enolpyruvylshikimate-3-phosphate (EPSP) to yield chorismate, which is the branch point compound that serves as the starting substrate for the three terminal pathways of aromatic amino acid biosynthesis. This reaction introduces a second double bond into the aromatic ring system. The sequence is that of Chorismate synthase from Saccharolobus islandicus (strain Y.N.15.51 / Yellowstone #2) (Sulfolobus islandicus).